The sequence spans 466 residues: 3-isopropylmalate dehydratase large subunit (466 aa).

[4Fe-4S] cluster contacts are provided by C347, C407, and C410.

It belongs to the aconitase/IPM isomerase family. LeuC type 1 subfamily. In terms of assembly, heterodimer of LeuC and LeuD. Requires [4Fe-4S] cluster as cofactor.

It carries out the reaction (2R,3S)-3-isopropylmalate = (2S)-2-isopropylmalate. Its pathway is amino-acid biosynthesis; L-leucine biosynthesis; L-leucine from 3-methyl-2-oxobutanoate: step 2/4. Functionally, catalyzes the isomerization between 2-isopropylmalate and 3-isopropylmalate, via the formation of 2-isopropylmaleate. The sequence is that of 3-isopropylmalate dehydratase large subunit from Vibrio vulnificus (strain CMCP6).